The primary structure comprises 475 residues: Probable phenylalanine--tRNA ligase alpha subunit (475 aa).

Positions 2–151 (TAVAQKIIEN…KRKLVSRRKK (150 aa)) are contains the major tRNA-Phe binding sites. Residues Thr-309, 351–353 (QVE), and Tyr-391 each bind L-phenylalanine. Residue Glu-393 participates in Mg(2+) binding. Phe-417 contacts L-phenylalanine.

It belongs to the class-II aminoacyl-tRNA synthetase family. Phe-tRNA synthetase alpha subunit type 2 subfamily. In terms of assembly, tetramer of two alpha and two beta subunits. Requires Mg(2+) as cofactor.

Its subcellular location is the cytoplasm. The catalysed reaction is tRNA(Phe) + L-phenylalanine + ATP = L-phenylalanyl-tRNA(Phe) + AMP + diphosphate + H(+). The polypeptide is Probable phenylalanine--tRNA ligase alpha subunit (Encephalitozoon cuniculi (strain GB-M1) (Microsporidian parasite)).